The sequence spans 374 residues: 2-aminoethylphosphonate--pyruvate transaminase 1 (374 aa).

K195 carries the N6-(pyridoxal phosphate)lysine modification.

This sequence belongs to the class-V pyridoxal-phosphate-dependent aminotransferase family. PhnW subfamily. As to quaternary structure, homodimer. Requires pyridoxal 5'-phosphate as cofactor.

The catalysed reaction is (2-aminoethyl)phosphonate + pyruvate = phosphonoacetaldehyde + L-alanine. Involved in phosphonate degradation. The polypeptide is 2-aminoethylphosphonate--pyruvate transaminase 1 (Polaromonas sp. (strain JS666 / ATCC BAA-500)).